Here is a 355-residue protein sequence, read N- to C-terminus: Peptide chain release factor 1 (355 aa).

Glutamine 233 is modified (N5-methylglutamine). Residues 283–293 are compositionally biased toward basic and acidic residues; that stretch reads EKNKDRADARK. Residues 283-304 are disordered; it reads EKNKDRADARKSQVGTGDRSER.

This sequence belongs to the prokaryotic/mitochondrial release factor family. Methylated by PrmC. Methylation increases the termination efficiency of RF1.

It localises to the cytoplasm. Functionally, peptide chain release factor 1 directs the termination of translation in response to the peptide chain termination codons UAG and UAA. The sequence is that of Peptide chain release factor 1 from Finegoldia magna (strain ATCC 29328 / DSM 20472 / WAL 2508) (Peptostreptococcus magnus).